The chain runs to 82 residues: Cytochrome c oxidase subunit 8, mitochondrial (82 aa).

A mitochondrion-targeting transit peptide spans 1–31 (MFSRVALRAAPRQQPFSLVARRTFQTTRAQL). Residues 32–52 (SSPYHYPEGPRSNLPFNPKTR) are Mitochondrial matrix-facing. A helical transmembrane segment spans residues 53–75 (FFWFRYLMYCVVGFGSPVAIAVW). The Mitochondrial intermembrane segment spans residues 76–82 (QTYRPRS).

The protein belongs to the cytochrome c oxidase VIIc family. As to quaternary structure, component of the cytochrome c oxidase (complex IV, CIV), a multisubunit enzyme composed of 11 subunits. The complex is composed of a catalytic core of 3 subunits Cox1, Cox2 and Cox3, encoded in the mitochondrial DNA, and 8 supernumerary subunits Cox4, Cox5a/Cox5, Cox6, Cox7, Cox8, Cox7a/Cox9, Cox6b/Cox12 and Cox6a/Cox13, which are encoded in the nuclear genome. The complex exists as a monomer or a dimer and forms respiratory supercomplexes (SCs) in the inner mitochondrial membrane with NADH-ubiquinone oxidoreductase (complex I, CI) and ubiquinol-cytochrome c oxidoreductase (cytochrome b-c1 complex, complex III, CIII), resulting in various different assemblies (supercomplexes I(1)IV(1), I(1)III(3)IV(2), III(2)IV(1) and III(2)IV(2) as well as larger supercomplexes of compositions like I(1)III(2)IV(5-6)).

The protein resides in the mitochondrion inner membrane. The protein operates within energy metabolism; oxidative phosphorylation. In terms of biological role, component of the cytochrome c oxidase, the last enzyme in the mitochondrial electron transport chain which drives oxidative phosphorylation. The respiratory chain contains 3 multisubunit complexes succinate dehydrogenase (complex II, CII), ubiquinol-cytochrome c oxidoreductase (cytochrome b-c1 complex, complex III, CIII) and cytochrome c oxidase (complex IV, CIV), that cooperate to transfer electrons derived from NADH and succinate to molecular oxygen, creating an electrochemical gradient over the inner membrane that drives transmembrane transport and the ATP synthase. Cytochrome c oxidase is the component of the respiratory chain that catalyzes the reduction of oxygen to water. Electrons originating from reduced cytochrome c in the intermembrane space (IMS) are transferred via the dinuclear copper A center (CU(A)) of Cox2 and heme A of Cox1 to the active site in Cox1, a binuclear center (BNC) formed by heme A3 and copper B (CU(B)). The BNC reduces molecular oxygen to 2 water molecules using 4 electrons from cytochrome c in the IMS and 4 protons from the mitochondrial matrix. The sequence is that of Cytochrome c oxidase subunit 8, mitochondrial (cox-15) from Neurospora crassa (strain ATCC 24698 / 74-OR23-1A / CBS 708.71 / DSM 1257 / FGSC 987).